The chain runs to 481 residues: Velvet complex subunit B (481 aa).

Disordered stretches follow at residues 1–157 (MNSA…YSKI) and 241–339 (GTGA…NGYG). 3 stretches are compositionally biased toward pro residues: residues 36–45 (HPPPPLPPPS), 53–62 (PPLPPPPSAP), and 96–112 (PYAP…QYPR). In terms of domain architecture, Velvet spans 160–464 (GSGWKYSLDV…ANQGIKIPIR (305 aa)). 2 stretches are compositionally biased toward low complexity: residues 241-255 (GTGA…TYSS) and 293-325 (QQSY…SAEP).

This sequence belongs to the velvet family. VelB subfamily. As to quaternary structure, component of the heterotrimeric velvet complex composed of laeA, veA and velB; VeA acting as a bridging protein between laeA and velB. Forms a heterodimeric complex with vosA; the formation of the velB-vosA complex is light-dependent.

It localises to the nucleus. The protein localises to the cytoplasm. Component of the velvet transcription factor complex that controls sexual/asexual developmental ratio in response to light, promoting sexual development in the darkness while stimulating asexual sporulation under illumination. The velvet complex acts as a global regulator for secondary metabolite gene expression. Component of the velB-VosA heterodimeric complex that plays a dual role in activating genes associated with spore maturation and repressing certain development-associated genes. The velB-VosA complex binds DNA through the DNA-binding domain of vosA that recognizes an 11-nucleotide consensus sequence 5'-CTGGCCGCGGC-3' consisting of two motifs in the promoters of key developmental regulatory genes. Controls the biosynthetic gene cluster for beauvericin, a depsipeptide mycotoxin that functions as a virulence determinant. Also regulates chromatin structure and transcription of siderophore biosynthetic genes and is required for infection of tomato plants. This is Velvet complex subunit B from Fusarium oxysporum f. sp. lycopersici (strain 4287 / CBS 123668 / FGSC 9935 / NRRL 34936) (Fusarium vascular wilt of tomato).